Consider the following 155-residue polypeptide: 2-C-methyl-D-erythritol 2,4-cyclodiphosphate synthase (155 aa).

The a divalent metal cation site is built by D8 and H10. Residues 8-10 and 34-35 contribute to the 4-CDP-2-C-methyl-D-erythritol 2-phosphate site; these read DVH and HS. Position 42 (H42) interacts with a divalent metal cation. Residues 56 to 58, 61 to 65, 100 to 106, 132 to 135, F139, and R142 contribute to the 4-CDP-2-C-methyl-D-erythritol 2-phosphate site; these read DIG, FPDTD, AQAPKMA, and TTTE.

The protein belongs to the IspF family. In terms of assembly, homotrimer. The cofactor is a divalent metal cation.

The catalysed reaction is 4-CDP-2-C-methyl-D-erythritol 2-phosphate = 2-C-methyl-D-erythritol 2,4-cyclic diphosphate + CMP. It functions in the pathway isoprenoid biosynthesis; isopentenyl diphosphate biosynthesis via DXP pathway; isopentenyl diphosphate from 1-deoxy-D-xylulose 5-phosphate: step 4/6. In terms of biological role, involved in the biosynthesis of isopentenyl diphosphate (IPP) and dimethylallyl diphosphate (DMAPP), two major building blocks of isoprenoid compounds. Catalyzes the conversion of 4-diphosphocytidyl-2-C-methyl-D-erythritol 2-phosphate (CDP-ME2P) to 2-C-methyl-D-erythritol 2,4-cyclodiphosphate (ME-CPP) with a corresponding release of cytidine 5-monophosphate (CMP). This is 2-C-methyl-D-erythritol 2,4-cyclodiphosphate synthase from Saccharophagus degradans (strain 2-40 / ATCC 43961 / DSM 17024).